Consider the following 89-residue polypeptide: Small ribosomal subunit protein uS14A (89 aa).

Belongs to the universal ribosomal protein uS14 family. In terms of assembly, part of the 30S ribosomal subunit. Contacts proteins S3 and S10.

Its function is as follows. Binds 16S rRNA, required for the assembly of 30S particles and may also be responsible for determining the conformation of the 16S rRNA at the A site. The protein is Small ribosomal subunit protein uS14A of Limosilactobacillus reuteri (strain DSM 20016) (Lactobacillus reuteri).